A 386-amino-acid polypeptide reads, in one-letter code: Ferredoxin--NADP reductase (386 aa).

Positions Ser-9–Leu-67 constitute a CpcD-like domain. In terms of domain architecture, FAD-binding FR-type spans Asn-104 to Leu-228. FAD-binding positions include Arg-163–Ser-166, Cys-184–Arg-186, Tyr-190, Val-202–Ser-204, and Thr-243. NADP(+) contacts are provided by Ser-166 and Arg-186. NADP(+) is bound by residues Thr-243, Val-275–Ala-276, Ser-305–Arg-306, Lys-315–Gln-319, Gly-344–Leu-345, and Glu-384.

This sequence belongs to the ferredoxin--NADP reductase type 1 family. Requires FAD as cofactor.

It localises to the cellular thylakoid membrane. It catalyses the reaction 2 reduced [2Fe-2S]-[ferredoxin] + NADP(+) + H(+) = 2 oxidized [2Fe-2S]-[ferredoxin] + NADPH. This chain is Ferredoxin--NADP reductase (petH), found in Thermosynechococcus vestitus (strain NIES-2133 / IAM M-273 / BP-1).